Consider the following 220-residue polypeptide: Putative respiratory nitrate reductase subunit Rieske (220 aa).

The 89-residue stretch at 118 to 206 (KAPTLLVRHA…ITVSSEGYLI (89 aa)) folds into the Rieske domain. Residues C151, H153, C168, and H171 each contribute to the [2Fe-2S] cluster site. Cysteines 156 and 170 form a disulfide.

As to quaternary structure, probable multiprotein complex; a catalytic heterodimer of an alpha and beta chain is proposed to associate with additional subunits involved in membrane attachment and electron transfer. It depends on [2Fe-2S] cluster as a cofactor.

It localises to the cell membrane. In terms of biological role, the respiratory membrane-bound nitrate reductase enzyme complex plays a role in generation of metabolic energy by using nitrate as a terminal electron acceptor during anaerobic conditions. Proposed Rieske subunit involved in a protonmotive Q-cycle mechanism-based electron transfer electrons to the beta subunit. The sequence is that of Putative respiratory nitrate reductase subunit Rieske (narB) from Haloferax mediterranei (strain ATCC 33500 / DSM 1411 / JCM 8866 / NBRC 14739 / NCIMB 2177 / R-4) (Halobacterium mediterranei).